The following is a 644-amino-acid chain: MKVSIEGSVVEVESGASCRDVLKQALSGKKFKKVLAARCGGTMLDLTATVPTACETLEPVYADSPEGLGLIRHSAAHVMADAVQRLFPGVKVTIGPAIENGFYYDFDYERPFTADDLEAIEAEMDKIIKAAHPFERSVMSKDEAKKMFADMGETYKLELIDAVPDDIVSIYRSGDFVDLCRGPHIPDTGCINAFKLMSVAGAYWRGDEKNAMLSRVYGTAFPDEKELKSYLNRIEEAKKRDHRKLGTQLDLFSFQEEGGSGMVYWHPKGALVRAILEDFERKEHLKRGYQIVQTPQILRRELWEKSGHYDNYRENMYFTDIDEQPYGVKPMNCVAHMLIYKSRSHSYRDLPVRLFELGVVHRHEKSGVLHGLLRVRQFTQDDAHIICTPDQLESEIVGVLNFVRDVMGVFGFEYSMEVSTRPEKSIGSDEDWDRATSALVKALEGQGLPYEINEGDGAFYGPKIDVKLRDCLGREWQCATVQCDFTLPDRFDLVYIGQDGERHRPVMVHRVILGSVERFIGVLTEHFAGAFPTWLAPVQARLLTVTDAQNEFAEEARAALMAQGIRVEVDTRNEKLGYKVREAQLEKIPYILVIGDKEVEARGVNVRLRKGDNLGLKTLDEVVDIIRADCEEPFKSGGMRYSFS.

Residues M1–Y61 enclose the TGS domain. A catalytic region spans residues D241 to P532. Zn(2+) contacts are provided by C333, H384, and H509.

This sequence belongs to the class-II aminoacyl-tRNA synthetase family. Homodimer. It depends on Zn(2+) as a cofactor.

The protein localises to the cytoplasm. The enzyme catalyses tRNA(Thr) + L-threonine + ATP = L-threonyl-tRNA(Thr) + AMP + diphosphate + H(+). Functionally, catalyzes the attachment of threonine to tRNA(Thr) in a two-step reaction: L-threonine is first activated by ATP to form Thr-AMP and then transferred to the acceptor end of tRNA(Thr). Also edits incorrectly charged L-seryl-tRNA(Thr). This Oleidesulfovibrio alaskensis (strain ATCC BAA-1058 / DSM 17464 / G20) (Desulfovibrio alaskensis) protein is Threonine--tRNA ligase.